Reading from the N-terminus, the 452-residue chain is Enolase (452 aa).

Residue glutamine 167 participates in (2R)-2-phosphoglycerate binding. Glutamate 209 acts as the Proton donor in catalysis. Mg(2+)-binding residues include aspartate 250, glutamate 310, and aspartate 337. The (2R)-2-phosphoglycerate site is built by lysine 362, arginine 391, serine 392, and lysine 413. The active-site Proton acceptor is lysine 362.

It belongs to the enolase family. Mg(2+) is required as a cofactor.

Its subcellular location is the cytoplasm. It is found in the secreted. The protein resides in the cell surface. The catalysed reaction is (2R)-2-phosphoglycerate = phosphoenolpyruvate + H2O. It functions in the pathway carbohydrate degradation; glycolysis; pyruvate from D-glyceraldehyde 3-phosphate: step 4/5. In terms of biological role, catalyzes the reversible conversion of 2-phosphoglycerate (2-PG) into phosphoenolpyruvate (PEP). It is essential for the degradation of carbohydrates via glycolysis. The chain is Enolase from Mycoplasmopsis synoviae (strain 53) (Mycoplasma synoviae).